The sequence spans 124 residues: S-adenosylmethionine decarboxylase proenzyme (124 aa).

Residue Ser63 is the Schiff-base intermediate with substrate; via pyruvic acid of the active site. Ser63 carries the post-translational modification Pyruvic acid (Ser); by autocatalysis. The Proton acceptor; for processing activity role is filled by His68. The active-site Proton donor; for catalytic activity is the Cys83.

It belongs to the prokaryotic AdoMetDC family. Type 1 subfamily. Heterotetramer of two alpha and two beta chains arranged as a dimer of alpha/beta heterodimers. The cofactor is pyruvate. In terms of processing, is synthesized initially as an inactive proenzyme. Formation of the active enzyme involves a self-maturation process in which the active site pyruvoyl group is generated from an internal serine residue via an autocatalytic post-translational modification. Two non-identical subunits are generated from the proenzyme in this reaction, and the pyruvate is formed at the N-terminus of the alpha chain, which is derived from the carboxyl end of the proenzyme. The post-translation cleavage follows an unusual pathway, termed non-hydrolytic serinolysis, in which the side chain hydroxyl group of the serine supplies its oxygen atom to form the C-terminus of the beta chain, while the remainder of the serine residue undergoes an oxidative deamination to produce ammonia and the pyruvoyl group blocking the N-terminus of the alpha chain.

The catalysed reaction is S-adenosyl-L-methionine + H(+) = S-adenosyl 3-(methylsulfanyl)propylamine + CO2. It functions in the pathway amine and polyamine biosynthesis; S-adenosylmethioninamine biosynthesis; S-adenosylmethioninamine from S-adenosyl-L-methionine: step 1/1. Catalyzes the decarboxylation of S-adenosylmethionine to S-adenosylmethioninamine (dcAdoMet), the propylamine donor required for the synthesis of the polyamines spermine and spermidine from the diamine putrescine. The protein is S-adenosylmethionine decarboxylase proenzyme of Anoxybacillus flavithermus (strain DSM 21510 / WK1).